We begin with the raw amino-acid sequence, 39 residues long: Glutenin, high molecular weight subunit PC237 (39 aa).

The protein belongs to the gliadin/glutenin family. As to quaternary structure, disulfide-bridge linked aggregates.

Glutenins are high-molecular weight seed storage proteins of wheat endosperm. Thought to be responsible for the visco-elastic property of wheat dough. This Triticum aestivum (Wheat) protein is Glutenin, high molecular weight subunit PC237.